Here is a 455-residue protein sequence, read N- to C-terminus: Chromosomal replication initiator protein DnaA (455 aa).

Residues 1–75 are domain I, interacts with DnaA modulators; that stretch reads MDTNNNIEKE…EILSQNKVGM (75 aa). The segment at 75-106 is domain II; it reads MHLAHSVDVRIEVAPKIQINAQANINYKAIKT. The tract at residues 107–321 is domain III, AAA+ region; sequence SVKDSYTFEN…GAIIKISVNA (215 aa). ATP is bound by residues Gly151, Gly153, Lys154, and Thr155. The tract at residues 322 to 455 is domain IV, binds dsDNA; that stretch reads NLMNAPIDLN…DKKTAFNSSE (134 aa).

The protein belongs to the DnaA family. In terms of assembly, oligomerizes as a right-handed, spiral filament on DNA at oriC.

The protein localises to the cytoplasm. Functionally, plays an essential role in the initiation and regulation of chromosomal replication. ATP-DnaA binds to the origin of replication (oriC) to initiate formation of the DNA replication initiation complex once per cell cycle. Binds the DnaA box (a 9 base pair repeat at the origin) and separates the double-stranded (ds)DNA. Forms a right-handed helical filament on oriC DNA; dsDNA binds to the exterior of the filament while single-stranded (ss)DNA is stabiized in the filament's interior. The ATP-DnaA-oriC complex binds and stabilizes one strand of the AT-rich DNA unwinding element (DUE), permitting loading of DNA polymerase. After initiation quickly degrades to an ADP-DnaA complex that is not apt for DNA replication. Binds acidic phospholipids. The polypeptide is Chromosomal replication initiator protein DnaA (Helicobacter pylori (strain P12)).